The chain runs to 318 residues: NADH-ubiquinone oxidoreductase chain 1 (318 aa).

Transmembrane regions (helical) follow at residues 2–22 (FMINLLLMIVPILLAVAFLTL), 68–88 (ISMFIIAPILALALALTMWTP), 100–120 (LGVLFMLAMSSLAVYSILWSG), 146–166 (LAIILLSVLLLNGSFTLPTLI), 171–191 (HMWLIIPSWPLAMMWFISTLA), 222–242 (LFFLAEYANIIMMNIFTTILF), 253–273 (ELYTINFVTKSMLLTISFLWV), and 293–313 (FLPLTLALCMWHVTMPIITAG).

The protein belongs to the complex I subunit 1 family. Core subunit of respiratory chain NADH dehydrogenase (Complex I) which is composed of 45 different subunits.

Its subcellular location is the mitochondrion inner membrane. It carries out the reaction a ubiquinone + NADH + 5 H(+)(in) = a ubiquinol + NAD(+) + 4 H(+)(out). Its function is as follows. Core subunit of the mitochondrial membrane respiratory chain NADH dehydrogenase (Complex I) which catalyzes electron transfer from NADH through the respiratory chain, using ubiquinone as an electron acceptor. Essential for the catalytic activity and assembly of complex I. The sequence is that of NADH-ubiquinone oxidoreductase chain 1 (MT-ND1) from Hipposideros diadema (Diadem leaf-nosed bat).